We begin with the raw amino-acid sequence, 294 residues long: Large ribosomal subunit protein uL18B (294 aa).

It belongs to the universal ribosomal protein uL18 family. In terms of assembly, component of the large ribosomal subunit (LSU). Mature yeast ribosomes consist of a small (40S) and a large (60S) subunit. The 40S small subunit contains 1 molecule of ribosomal RNA (18S rRNA) and 33 different proteins (encoded by 57 genes). The large 60S subunit contains 3 rRNA molecules (25S, 5.8S and 5S rRNA) and 46 different proteins (encoded by 81 genes). Component of a hexameric 5S RNP precursor complex, composed of 5S RNA, rrs1, rpf2, rpl5a/rpl5b, rpl11a/rpl11b and syo1; this complex acts as a precursor for ribosome assembly. rpl5a/rpl5b/uL18 forms a heterotrimeric complex with syo1 and rpl11a/rpl11b/uL5. Interaction of this complex with KAP104 allows the nuclear import of the heterotrimer.

The protein resides in the cytoplasm. It is found in the nucleus. In terms of biological role, component of the ribosome, a large ribonucleoprotein complex responsible for the synthesis of proteins in the cell. The small ribosomal subunit (SSU) binds messenger RNAs (mRNAs) and translates the encoded message by selecting cognate aminoacyl-transfer RNA (tRNA) molecules. The large subunit (LSU) contains the ribosomal catalytic site termed the peptidyl transferase center (PTC), which catalyzes the formation of peptide bonds, thereby polymerizing the amino acids delivered by tRNAs into a polypeptide chain. The nascent polypeptides leave the ribosome through a tunnel in the LSU and interact with protein factors that function in enzymatic processing, targeting, and the membrane insertion of nascent chains at the exit of the ribosomal tunnel. The polypeptide is Large ribosomal subunit protein uL18B (rpl502) (Schizosaccharomyces pombe (strain 972 / ATCC 24843) (Fission yeast)).